We begin with the raw amino-acid sequence, 419 residues long: Zinc finger protein Pegasus (419 aa).

Residue lysine 5 forms a Glycyl lysine isopeptide (Lys-Gly) (interchain with G-Cter in SUMO2) linkage. C2H2-type zinc fingers lie at residues 82-104 (LKCR…IRIH), 110-132 (HRCH…MRSH), and 138-161 (YKCE…RRKH). Lysine 185 is covalently cross-linked (Glycyl lysine isopeptide (Lys-Gly) (interchain with G-Cter in SUMO2)). Composition is skewed to polar residues over residues 223 to 236 (QTDS…TTPT) and 262 to 273 (LSSLPPENQNPA). Disordered stretches follow at residues 223–247 (QTDS…QELM) and 262–356 (LSSL…PALP). The segment covering 290–311 (QPSTQAVVSAVSASIPQSSSPT) has biased composition (low complexity). The span at 332–349 (SEPSAHTSTPSIGNSQPS) shows a compositional bias: polar residues. 2 C2H2-type zinc fingers span residues 364-386 (HHCQ…MGCH) and 392-416 (FQCN…RGQH).

The protein belongs to the Ikaros C2H2-type zinc-finger protein family. In terms of assembly, self-associates. Interacts with other family members; IKZF1, IKZF2, IKZF3 and IKZF4. As to expression, expressed in brain, heart, skeletal muscle, kidney, and liver. Expressed in the hematopoietic cell lines MOLT-4, NALM-6 and K-562. Highly expressed in THP-1 and M-07e cell lines, which have characteristics of myeloid and early megakaryocytic cells respectively.

It is found in the nucleus. Its function is as follows. Transcriptional repressor that binds the core 5'GNNTGTNG-3' DNA consensus sequence. Involved in megakaryocyte differentiation. In Homo sapiens (Human), this protein is Zinc finger protein Pegasus (IKZF5).